A 230-amino-acid chain; its full sequence is Transmembrane protein 225 (230 aa).

Topologically, residues 1–8 are cytoplasmic; it reads MMHIPNRS. A helical transmembrane segment spans residues 9–29; sequence IQAANIFFSSGAILLLIVGLI. Residues 30–71 are Extracellular-facing; sequence MEDWVELIPKVRKDKTTHSPWLGCCPPFWPEESLEVVRRIMR. The chain crosses the membrane as a helical span at residues 72–92; that stretch reads MTLNISIYLNLIIGLQFSYMI. Topologically, residues 93–99 are cytoplasmic; the sequence is SQNKCVH. The helical transmembrane segment at 100-120 threads the bilayer; the sequence is LLVGFLSFFAGCLLFYAIIVY. The Extracellular segment spans residues 121-139; sequence HHKLNKGQYVYFVNYKTKW. A helical transmembrane segment spans residues 140 to 160; sequence IAFTVYLTIALFLTCGIFCFI. At 161-230 the chain is on the cytoplasmic side; sequence QSTNRCECMK…TQARRVTWAL (70 aa). The RVxF motif lies at 224–228; it reads RRVTW.

In terms of assembly, interacts (via RVxF motif) with PPP1CC. In terms of tissue distribution, expressed in testis, epididymis and spermatozoa (at protein level). Not expressed in brain, heart, lung, liver, spleen, kidney and skeletal muscle.

Its subcellular location is the cytoplasmic vesicle. The protein localises to the secretory vesicle. The protein resides in the acrosome membrane. Its function is as follows. Probably inhibits protein phosphatase 1 (PP1) in sperm via binding to catalytic subunit PPP1CC. This chain is Transmembrane protein 225 (Tmem225), found in Mus musculus (Mouse).